An 887-amino-acid chain; its full sequence is Bifunctional uridylyltransferase/uridylyl-removing enzyme (887 aa).

Positions 1–337 are uridylyltransferase; it reads MINTSPLLNY…RLPNYERKIE (337 aa). Residues 339–699 form a uridylyl-removing region; sequence VNDHFKIVDN…AHRKAAQDAV (361 aa). One can recognise an HD domain in the interval 457–579; it reads VDAHTLLLLR…LGDMEHLDYL (123 aa). ACT domains lie at 700 to 782 and 809 to 887; these read QIFI…LMQR and MVEI…ICQH.

The protein belongs to the GlnD family. Requires Mg(2+) as cofactor.

The catalysed reaction is [protein-PII]-L-tyrosine + UTP = [protein-PII]-uridylyl-L-tyrosine + diphosphate. It catalyses the reaction [protein-PII]-uridylyl-L-tyrosine + H2O = [protein-PII]-L-tyrosine + UMP + H(+). With respect to regulation, uridylyltransferase (UTase) activity is inhibited by glutamine, while glutamine activates uridylyl-removing (UR) activity. In terms of biological role, modifies, by uridylylation and deuridylylation, the PII regulatory proteins (GlnB and homologs), in response to the nitrogen status of the cell that GlnD senses through the glutamine level. Under low glutamine levels, catalyzes the conversion of the PII proteins and UTP to PII-UMP and PPi, while under higher glutamine levels, GlnD hydrolyzes PII-UMP to PII and UMP (deuridylylation). Thus, controls uridylylation state and activity of the PII proteins, and plays an important role in the regulation of nitrogen assimilation and metabolism. This is Bifunctional uridylyltransferase/uridylyl-removing enzyme from Acinetobacter baumannii (strain ATCC 17978 / DSM 105126 / CIP 53.77 / LMG 1025 / NCDC KC755 / 5377).